The following is a 108-amino-acid chain: Glutaredoxin 4 (108 aa).

Residues 4–106 (FQKIKKQIQD…KLILKVKKKY (103 aa)) form the Glutaredoxin domain. Position 21 (Lys-21) interacts with glutathione. Residue Cys-29 participates in [2Fe-2S] cluster binding. Residues Arg-58, Phe-70, and 83-84 (CS) contribute to the glutathione site.

It belongs to the glutaredoxin family. Monothiol subfamily. In terms of assembly, homodimer.

The protein localises to the cytoplasm. In terms of biological role, monothiol glutaredoxin involved in the biogenesis of iron-sulfur clusters. The polypeptide is Glutaredoxin 4 (grxD) (Buchnera aphidicola subsp. Acyrthosiphon pisum (strain APS) (Acyrthosiphon pisum symbiotic bacterium)).